The chain runs to 178 residues: Inner membrane-spanning protein YciB (178 aa).

5 helical membrane-spanning segments follow: residues 12 to 32 (LFFA…VAIV), 50 to 70 (PMQW…LVLH), 74 to 94 (FIMW…LISD), 120 to 140 (LTFA…FVAF), and 145 to 165 (AVWV…FVLA).

The protein belongs to the YciB family.

The protein resides in the cell inner membrane. Functionally, plays a role in cell envelope biogenesis, maintenance of cell envelope integrity and membrane homeostasis. In Laribacter hongkongensis (strain HLHK9), this protein is Inner membrane-spanning protein YciB.